The sequence spans 95 residues: Defensin-A3 (95 aa).

A signal peptide spans 1-19 (MRTLGLLLALLFLAAQTPA). Residues 20–61 (QLMGEEAEEATGRPEATEAQEAAAALMAARAADRHVTDPEQQ) constitute a propeptide that is removed on maturation. Intrachain disulfides connect C66-C93, C68-C82, and C72-C92.

It belongs to the alpha-defensin family. Highly expressed in spleen, and expressed at lower levels in intestin and lung.

It is found in the secreted. Has antimicrobial activity. This is Defensin-A3 from Ornithorhynchus anatinus (Duckbill platypus).